A 343-amino-acid polypeptide reads, in one-letter code: UDP-3-O-acylglucosamine N-acyltransferase (343 aa).

Residue His-238 is the Proton acceptor of the active site.

This sequence belongs to the transferase hexapeptide repeat family. LpxD subfamily. In terms of assembly, homotrimer.

It catalyses the reaction a UDP-3-O-[(3R)-3-hydroxyacyl]-alpha-D-glucosamine + a (3R)-hydroxyacyl-[ACP] = a UDP-2-N,3-O-bis[(3R)-3-hydroxyacyl]-alpha-D-glucosamine + holo-[ACP] + H(+). It functions in the pathway bacterial outer membrane biogenesis; LPS lipid A biosynthesis. In terms of biological role, catalyzes the N-acylation of UDP-3-O-acylglucosamine using 3-hydroxyacyl-ACP as the acyl donor. Is involved in the biosynthesis of lipid A, a phosphorylated glycolipid that anchors the lipopolysaccharide to the outer membrane of the cell. In Marinomonas sp. (strain MWYL1), this protein is UDP-3-O-acylglucosamine N-acyltransferase.